Reading from the N-terminus, the 528-residue chain is GMP synthase [glutamine-hydrolyzing] (528 aa).

A Glutamine amidotransferase type-1 domain is found at 13–204 (SILILDFGSQ…VYSISKCKAD (192 aa)). Catalysis depends on cysteine 90, which acts as the Nucleophile. Residues histidine 178 and glutamate 180 contribute to the active site. The 199-residue stretch at 205–403 (WNTETFLEET…LGLPDEIIKR (199 aa)) folds into the GMPS ATP-PPase domain. 232 to 238 (SGGVDSS) is an ATP binding site.

In terms of assembly, homodimer.

It carries out the reaction XMP + L-glutamine + ATP + H2O = GMP + L-glutamate + AMP + diphosphate + 2 H(+). Its pathway is purine metabolism; GMP biosynthesis; GMP from XMP (L-Gln route): step 1/1. Its function is as follows. Catalyzes the synthesis of GMP from XMP. This chain is GMP synthase [glutamine-hydrolyzing], found in Prochlorococcus marinus (strain MIT 9515).